The primary structure comprises 253 residues: Phosphoribosylaminoimidazole-succinocarboxamide synthase (253 aa).

The protein belongs to the SAICAR synthetase family.

The enzyme catalyses 5-amino-1-(5-phospho-D-ribosyl)imidazole-4-carboxylate + L-aspartate + ATP = (2S)-2-[5-amino-1-(5-phospho-beta-D-ribosyl)imidazole-4-carboxamido]succinate + ADP + phosphate + 2 H(+). It functions in the pathway purine metabolism; IMP biosynthesis via de novo pathway; 5-amino-1-(5-phospho-D-ribosyl)imidazole-4-carboxamide from 5-amino-1-(5-phospho-D-ribosyl)imidazole-4-carboxylate: step 1/2. This chain is Phosphoribosylaminoimidazole-succinocarboxamide synthase, found in Dinoroseobacter shibae (strain DSM 16493 / NCIMB 14021 / DFL 12).